An 867-amino-acid polypeptide reads, in one-letter code: Replication origin-binding protein (867 aa).

The tract at residues 1–39 is disordered; that stretch reads MNVATCTHQTHHAARAPGATSAPGAASGDPLGARRPIGD. Residues 15–28 show a composition bias toward low complexity; sequence RAPGATSAPGAASG. Residues 86–251 enclose the Helicase ATP-binding domain; the sequence is ASAPTARCVT…CSLRGEKNVH (166 aa). 99–106 is a binding site for ATP; the sequence is APMGSGKT.

This sequence belongs to the herpesviridae OriBP family. Homodimer. Interacts with the major DNA-binding protein ICP8. Interacts with the helicase/primase component UL8 and the polymerase accessory protein UL42.

It is found in the host nucleus. Functions as a docking protein to recruit essential components of the viral replication machinery to viral DNA origins. In the presence of the major DNA-binding protein, opens dsDNA leading to a conformational change in the origin that facilitates DNA unwinding and subsequent replication. This chain is Replication origin-binding protein, found in Human herpesvirus 2 (strain HG52) (HHV-2).